The primary structure comprises 158 residues: NAD(P)H-quinone oxidoreductase subunit J, chloroplastic (158 aa).

Belongs to the complex I 30 kDa subunit family. As to quaternary structure, NDH is composed of at least 16 different subunits, 5 of which are encoded in the nucleus.

The protein localises to the plastid. It is found in the chloroplast thylakoid membrane. It carries out the reaction a plastoquinone + NADH + (n+1) H(+)(in) = a plastoquinol + NAD(+) + n H(+)(out). The catalysed reaction is a plastoquinone + NADPH + (n+1) H(+)(in) = a plastoquinol + NADP(+) + n H(+)(out). In terms of biological role, NDH shuttles electrons from NAD(P)H:plastoquinone, via FMN and iron-sulfur (Fe-S) centers, to quinones in the photosynthetic chain and possibly in a chloroplast respiratory chain. The immediate electron acceptor for the enzyme in this species is believed to be plastoquinone. Couples the redox reaction to proton translocation, and thus conserves the redox energy in a proton gradient. In Angiopteris evecta (Mule's foot fern), this protein is NAD(P)H-quinone oxidoreductase subunit J, chloroplastic.